Consider the following 422-residue polypeptide: Signal recognition particle receptor FtsY (422 aa).

Residues 39–86 form a disordered region; it reads PERGVVDRSGGYTASSGITFSQTPTTQPAERIDTSGLPAVGDDATVPR. Residues 50-66 show a composition bias toward polar residues; it reads YTASSGITFSQTPTTQP. GTP is bound by residues 230-237, 312-316, and 374-377; these read GVNGTGKT, DTAGR, and TKLD.

This sequence belongs to the GTP-binding SRP family. FtsY subfamily. As to quaternary structure, part of the signal recognition particle protein translocation system, which is composed of SRP and FtsY.

The protein localises to the cell membrane. It localises to the cytoplasm. It carries out the reaction GTP + H2O = GDP + phosphate + H(+). Functionally, involved in targeting and insertion of nascent membrane proteins into the cytoplasmic membrane. Acts as a receptor for the complex formed by the signal recognition particle (SRP) and the ribosome-nascent chain (RNC). The chain is Signal recognition particle receptor FtsY from Mycobacterium bovis (strain ATCC BAA-935 / AF2122/97).